We begin with the raw amino-acid sequence, 253 residues long: MMPILVTLNKISVTFGSRRVLNDISLSLRPGKILTLLGPNGAGKSTLVRVVLGLIPPSSGSLVREPGLRIGYVPQKLHLDATLPLTVSRFMRLKPGVKKADILPALTRVQAAHLLDQPMQKLSGGENQRVLLARALLNRPQLLVLDEPTQGVDVNGQLALYDLIEQLRKELGCAVLMVSHDLHLVMAKTDEVLCLNQHICCSGAPEVVSTHPEFIAMFGNRGAEQLAVYRHNHNHRHDLHGKIILKNSGSRGA.

Residues 6 to 227 form the ABC transporter domain; the sequence is VTLNKISVTF…FGNRGAEQLA (222 aa). Residue 38-45 coordinates ATP; sequence GPNGAGKS.

The protein belongs to the ABC transporter superfamily. Zinc importer (TC 3.A.1.15.5) family. The complex is composed of two ATP-binding proteins (ZnuC), two transmembrane proteins (ZnuB) and a solute-binding protein (ZnuA).

It localises to the cell inner membrane. It carries out the reaction Zn(2+)(out) + ATP(in) + H2O(in) = Zn(2+)(in) + ADP(in) + phosphate(in) + H(+)(in). Part of the ABC transporter complex ZnuABC involved in zinc import. Responsible for energy coupling to the transport system. This Yersinia pestis bv. Antiqua (strain Antiqua) protein is Zinc import ATP-binding protein ZnuC.